The chain runs to 519 residues: Exodeoxyribonuclease 7 large subunit (519 aa).

Residues V500–L519 form a disordered region.

This sequence belongs to the XseA family. In terms of assembly, heterooligomer composed of large and small subunits.

The protein resides in the cytoplasm. The catalysed reaction is Exonucleolytic cleavage in either 5'- to 3'- or 3'- to 5'-direction to yield nucleoside 5'-phosphates.. Functionally, bidirectionally degrades single-stranded DNA into large acid-insoluble oligonucleotides, which are then degraded further into small acid-soluble oligonucleotides. This Cereibacter sphaeroides (strain ATCC 17029 / ATH 2.4.9) (Rhodobacter sphaeroides) protein is Exodeoxyribonuclease 7 large subunit.